Here is a 197-residue protein sequence, read N- to C-terminus: Endoribonuclease YbeY (197 aa).

Zn(2+) is bound by residues His-156, His-160, and His-166.

This sequence belongs to the endoribonuclease YbeY family. Requires Zn(2+) as cofactor.

Its subcellular location is the cytoplasm. Its function is as follows. Single strand-specific metallo-endoribonuclease involved in late-stage 70S ribosome quality control and in maturation of the 3' terminus of the 16S rRNA. This is Endoribonuclease YbeY from Cupriavidus metallidurans (strain ATCC 43123 / DSM 2839 / NBRC 102507 / CH34) (Ralstonia metallidurans).